Reading from the N-terminus, the 217-residue chain is Pyridoxine/pyridoxamine 5'-phosphate oxidase (217 aa).

Substrate-binding positions include 13 to 16 (RREY) and Lys-71. Residues 66–71 (RIVLLK), 81–82 (YT), Arg-87, Lys-88, and Gln-110 each bind FMN. Residues Tyr-128, Arg-132, and Ser-136 each contribute to the substrate site. FMN is bound by residues 145–146 (QS) and Trp-190. Residue 196–198 (RLH) coordinates substrate. Residue Arg-200 coordinates FMN.

This sequence belongs to the pyridoxamine 5'-phosphate oxidase family. As to quaternary structure, homodimer. Requires FMN as cofactor.

It carries out the reaction pyridoxamine 5'-phosphate + O2 + H2O = pyridoxal 5'-phosphate + H2O2 + NH4(+). The catalysed reaction is pyridoxine 5'-phosphate + O2 = pyridoxal 5'-phosphate + H2O2. The protein operates within cofactor metabolism; pyridoxal 5'-phosphate salvage; pyridoxal 5'-phosphate from pyridoxamine 5'-phosphate: step 1/1. It participates in cofactor metabolism; pyridoxal 5'-phosphate salvage; pyridoxal 5'-phosphate from pyridoxine 5'-phosphate: step 1/1. Functionally, catalyzes the oxidation of either pyridoxine 5'-phosphate (PNP) or pyridoxamine 5'-phosphate (PMP) into pyridoxal 5'-phosphate (PLP). The sequence is that of Pyridoxine/pyridoxamine 5'-phosphate oxidase from Yersinia pestis bv. Antiqua (strain Antiqua).